The sequence spans 634 residues: Chaperone protein HtpG (634 aa).

Positions 1–343 (MTEAENRVTL…SDSLPLNVSR (343 aa)) are a; substrate-binding. The interval 344 to 560 (EILQENKQLE…SYGMSRTMER (217 aa)) is b. The segment at 561–634 (IMKSAGQNIP…KLNGLLQSLL (74 aa)) is c.

This sequence belongs to the heat shock protein 90 family. Homodimer.

It localises to the cytoplasm. Its function is as follows. Molecular chaperone. Has ATPase activity. This Methylococcus capsulatus (strain ATCC 33009 / NCIMB 11132 / Bath) protein is Chaperone protein HtpG.